A 491-amino-acid polypeptide reads, in one-letter code: Probable cysteine proteinase 024R (491 aa).

Catalysis depends on residues cysteine 132, histidine 325, and asparagine 355. The helical transmembrane segment at 467-487 threads the bilayer; the sequence is ALDLALLVLPALLIVIVVLIG.

The protein belongs to the peptidase C1 family.

The protein localises to the membrane. Functionally, probable cysteine protease. This chain is Probable cysteine proteinase 024R, found in Invertebrate iridescent virus 3 (IIV-3).